The sequence spans 415 residues: Putative competence-damage inducible protein (415 aa).

It belongs to the CinA family.

This chain is Putative competence-damage inducible protein, found in Listeria welshimeri serovar 6b (strain ATCC 35897 / DSM 20650 / CCUG 15529 / CIP 8149 / NCTC 11857 / SLCC 5334 / V8).